The sequence spans 195 residues: Cbp/p300-interacting transactivator 1 (195 aa).

Disordered regions lie at residues Met-1–Pro-24 and Ala-51–Ile-149. The segment covering Gly-54–Pro-78 has biased composition (low complexity). Residues Met-97 to Tyr-106 show a composition bias toward polar residues. Positions Ser-137 to Ala-148 are enriched in low complexity. The Nuclear export signal motif lies at Leu-160 to Leu-169.

It belongs to the CITED family. As to quaternary structure, interacts (via C-terminus) with CREBBP. Interacts with EGR2. Homodimer. Binds to RBM14. Interacts (via N-terminus) with HSPA8; the interaction suppresses the association of CITED1 with p300/CBP and SMAD-mediated transcription transactivation. Interacts (via C-terminus) with TOX3 (via HGM box); the interaction increases estrogen-response element (ERE)-dependent transcription and protection against cell death. Interacts with ESR1; the interaction occurs in a estrogen-dependent manner. Interacts (unphosphorylated form preferentially and via C-terminus) with EP300. Post-translationally, phosphorylated. Phosphorylation changes in a cell cycle-dependent manner and reduces its transcriptional cofactor activity.

It is found in the nucleus. The protein localises to the cytoplasm. Transcriptional coactivator of the p300/CBP-mediated transcription complex. Enhances SMAD-mediated transcription by strengthening the functional link between the DNA-binding SMAD transcription factors and the p300/CBP transcription coactivator complex. Stimulates estrogen-dependent transactivation activity mediated by estrogen receptors signaling; stabilizes the interaction of estrogen receptor ESR1 and histone acetyltransferase EP300. Positively regulates TGF-beta signaling through its association with the SMAD/p300/CBP-mediated transcriptional coactivator complex. Induces transcription from estrogen-responsive promoters and protection against cell death. Potentiates EGR2-mediated transcriptional activation activity from the ERBB2 promoter. Acts as an inhibitor of osteoblastic mineralization through a cAMP-dependent parathyroid hormone receptor signaling. May play a role in pigmentation of melanocytes. Associates with chromatin to the estrogen-responsive TGF-alpha promoter region in a estrogen-dependent manner. The polypeptide is Cbp/p300-interacting transactivator 1 (CITED1) (Bos taurus (Bovine)).